The primary structure comprises 440 residues: Transposon Ty1-OL Gag polyprotein (440 aa).

Polar residues-rich tracts occupy residues 1–23, 48–60, and 127–152; these read MESQ…SVTS, TKAN…TPAS, and QSQF…GNTF. Disordered regions lie at residues 1–93, 126–173, and 352–440; these read MESQ…MMTQ, PQSQ…RPPP, and GSRN…PGTY. Over residues 153-165 the composition is skewed to low complexity; that stretch reads TDSSSADSDMTST. The interval 299-401 is RNA-binding; sequence NNGIHINNKV…NSKSKTARAH (103 aa). Over residues 402-418 the composition is skewed to low complexity; that stretch reads NVSTSNNSPSTDNDSIS. Phosphoserine is present on Ser-416. The span at 419-428 shows a compositional bias: polar residues; it reads KSTTEPIQLN. Positions 429–440 are enriched in basic and acidic residues; that stretch reads NKHDLHLRPGTY.

Homotrimer.

Its subcellular location is the cytoplasm. In terms of biological role, capsid protein (CA) is the structural component of the virus-like particle (VLP), forming the shell that encapsulates the retrotransposons dimeric RNA genome. The particles are assembled from trimer-clustered units and there are holes in the capsid shells that allow for the diffusion of macromolecules. CA also has nucleocapsid-like chaperone activity, promoting primer tRNA(i)-Met annealing to the multipartite primer-binding site (PBS), dimerization of Ty1 RNA and initiation of reverse transcription. This is Transposon Ty1-OL Gag polyprotein (TY1A-OL) from Saccharomyces cerevisiae (strain ATCC 204508 / S288c) (Baker's yeast).